We begin with the raw amino-acid sequence, 363 residues long: uncharacterized protein (363 aa).

The N-terminal stretch at 1 to 20 is a signal peptide; it reads MKRAPLITGLLLISTSCAYA.

It belongs to the fimbrial protein family.

The protein resides in the fimbrium. Part of the yraHIJK fimbrial operon. Could contribute to adhesion to various surfaces in specific environmental niches. Increases adhesion to eukaryotic T24 bladder epithelial cells in the absence of fim operon. This is an uncharacterized protein from Escherichia coli (strain K12).